The sequence spans 476 residues: DnaJ protein P58IPK homolog A (476 aa).

The first 28 residues, 1–28, serve as a signal peptide directing secretion; it reads MVAMARWPWRVLLPLLLLHSSPVFFVFA. 8 TPR repeats span residues 36-69, 70-103, 116-150, 152-184, 185-218, 231-264, 269-302, and 304-336; these read PSTLFKRALEMMNLRKYDGSLGLLNAVLEVEPNH, SEAYRQRASVLRHKCRYKEAEGDYSKYLELKPGS, AQNALESAYGQFESHDFSKVLDYINKIVLVFSPDC, KAKLLKAKALLALKDYSTVISETGFILKEDEDN, LDALLLRGRAYYYLADHDVASRHYQKGLRLDPEH, LVKKTKSAEDNAAKGKLRVSAEDYKASLAMDPDH, VHLYLGLCKVLVKLGRGKEAISSCTEALNIDGEL, and DALTQRGEAKLLTEDWEGAVQDLKEAAQKSPQD. Positions 357–423 constitute a J domain; that stretch reads DWYKILGISK…DKRVRYDRGE (67 aa).

In terms of assembly, interacts with BIP1.

Its subcellular location is the endoplasmic reticulum lumen. Functionally, may play a role in protein folding in the endoplasmic reticulum. The sequence is that of DnaJ protein P58IPK homolog A from Oryza sativa subsp. japonica (Rice).